The primary structure comprises 50 residues: Ampulexin 2 (50 aa).

The first 26 residues, 1 to 26 (MKAIMVLFYVMTLTIIGSFSMVSGSP), serve as a signal peptide directing secretion.

Dimer; disulfide-linked. In terms of tissue distribution, expressed in venom sac and, to a lesser extent, in venom gland. Not expressed in brain.

Its subcellular location is the secreted. Amphipathic peptide which probably adopts an alpha-helical structure. Has no antimicrobial activity against E.coli DH5alpha or B.thuringiensis. Is not cytotoxic in vitro. This Ampulex compressa (Emerald cockroach wasp) protein is Ampulexin 2.